The primary structure comprises 133 residues: Putative esterase TV1331 (133 aa).

It belongs to the thioesterase PaaI family.

This is Putative esterase TV1331 from Thermoplasma volcanium (strain ATCC 51530 / DSM 4299 / JCM 9571 / NBRC 15438 / GSS1).